The primary structure comprises 598 residues: MNNIRNFAIIAHIDHGKSTLADRLIEECNGLETREMTNQVLDSMDIERERGITIKAQTVRLNYTANNGNKYCLNLMDTPGHVDFSYEVSRSLAACEGSLLVVDSSQGVEAQTLANVYKAIDNNHEIIVVLNKVDLPAADPERIKLQIEEVIGIDATESILISAKTGLGIKDVLEAIVTKLPAPQGDTNAPLQAILVDSWYDPYLGVVILVRVKNGVLKKGMRIVMMSNNATYQVDNIGIFTPKKVMTGELSAGEVGFITASMKEVADCKVGDTITEEKRPCSKALPGFKEVHPVVFCSIFPNNTDDFKYLREALEKLHLNDASFTFDAETSNALGYGFRCGFLGMLHLEVIQERLEREFDLDLTATAPSVIYKVETQNGKVLNIHNPSDMPDPTKIEIVEEPWITATIMVPDQYLGEILSLCEERRGEQQDLSYVGNTTTALLKYKLPLSEVVFDFYDRLKSISKGYASLDWEISDYQESQIDKLSFLVNGEPVDALACIVHKSRAEKRGREICARLKDLIPRQQYKIAIQAAVGGKIIARETINPYRKDVTAKLYGGDVTRRMKLLEKQKKGKKRLHSVGNINIPQNAFIEALKIND.

The region spanning 2 to 184 (NNIRNFAIIA…AIVTKLPAPQ (183 aa)) is the tr-type G domain. Residues 14-19 (DHGKST) and 131-134 (NKVD) each bind GTP.

Belongs to the TRAFAC class translation factor GTPase superfamily. Classic translation factor GTPase family. LepA subfamily.

It localises to the cell membrane. It carries out the reaction GTP + H2O = GDP + phosphate + H(+). Functionally, required for accurate and efficient protein synthesis under certain stress conditions. May act as a fidelity factor of the translation reaction, by catalyzing a one-codon backward translocation of tRNAs on improperly translocated ribosomes. Back-translocation proceeds from a post-translocation (POST) complex to a pre-translocation (PRE) complex, thus giving elongation factor G a second chance to translocate the tRNAs correctly. Binds to ribosomes in a GTP-dependent manner. The protein is Elongation factor 4 of Wolbachia pipientis subsp. Culex pipiens (strain wPip).